A 129-amino-acid polypeptide reads, in one-letter code: uncharacterized protein (129 aa).

It is found in the cytoplasm. The protein resides in the cytosol. It localises to the nucleus. This is an uncharacterized protein from Schizosaccharomyces pombe (strain 972 / ATCC 24843) (Fission yeast).